The sequence spans 242 residues: Cytochrome c oxidase subunit 2 (242 aa).

At 1 to 30 the chain is on the mitochondrial intermembrane side; that stretch reads MSFYGSRYFGDIVHGELGKDLFRYHGFVMM. The chain crosses the membrane as a helical span at residues 31-47; the sequence is VAVAVLVFVMYMGCVIL. Topologically, residues 48-66 are mitochondrial matrix; that stretch reads FTKFSYRHFLNRQRLEFWW. Residues 67–83 form a helical membrane-spanning segment; it reads TIVPMLMLVGLWXPSMI. Residues 84 to 242 lie on the Mitochondrial intermembrane side of the membrane; it reads NLYYMEEVKR…YFVMWLEALN (159 aa). H176, C211, E213, C215, H219, and M222 together coordinate Cu cation. Residue E213 participates in Mg(2+) binding.

This sequence belongs to the cytochrome c oxidase subunit 2 family. In terms of assembly, component of the cytochrome c oxidase (complex IV, CIV), a multisubunit enzyme composed of a catalytic core of 3 subunits and several supernumerary subunits. The complex exists as a monomer or a dimer and forms supercomplexes (SCs) in the inner mitochondrial membrane with ubiquinol-cytochrome c oxidoreductase (cytochrome b-c1 complex, complex III, CIII). Cu cation is required as a cofactor.

It is found in the mitochondrion inner membrane. It carries out the reaction 4 Fe(II)-[cytochrome c] + O2 + 8 H(+)(in) = 4 Fe(III)-[cytochrome c] + 2 H2O + 4 H(+)(out). Functionally, component of the cytochrome c oxidase, the last enzyme in the mitochondrial electron transport chain which drives oxidative phosphorylation. The respiratory chain contains 3 multisubunit complexes succinate dehydrogenase (complex II, CII), ubiquinol-cytochrome c oxidoreductase (cytochrome b-c1 complex, complex III, CIII) and cytochrome c oxidase (complex IV, CIV), that cooperate to transfer electrons derived from NADH and succinate to molecular oxygen, creating an electrochemical gradient over the inner membrane that drives transmembrane transport and the ATP synthase. Cytochrome c oxidase is the component of the respiratory chain that catalyzes the reduction of oxygen to water. Electrons originating from reduced cytochrome c in the intermembrane space (IMS) are transferred via the dinuclear copper A center (CU(A)) of subunit 2 and heme A of subunit 1 to the active site in subunit 1, a binuclear center (BNC) formed by heme A3 and copper B (CU(B)). The BNC reduces molecular oxygen to 2 water molecules using 4 electrons from cytochrome c in the IMS and 4 protons from the mitochondrial matrix. This chain is Cytochrome c oxidase subunit 2 (COII), found in Mytilus edulis (Blue mussel).